The primary structure comprises 296 residues: Homoserine kinase (296 aa).

84–94 lines the ATP pocket; that stretch reads PLARGLGSSSS.

It belongs to the GHMP kinase family. Homoserine kinase subfamily.

It localises to the cytoplasm. It carries out the reaction L-homoserine + ATP = O-phospho-L-homoserine + ADP + H(+). The protein operates within amino-acid biosynthesis; L-threonine biosynthesis; L-threonine from L-aspartate: step 4/5. Functionally, catalyzes the ATP-dependent phosphorylation of L-homoserine to L-homoserine phosphate. The sequence is that of Homoserine kinase from Lactococcus lactis subsp. lactis (strain IL1403) (Streptococcus lactis).